Here is a 332-residue protein sequence, read N- to C-terminus: tRNA-dihydrouridine(20/20a) synthase (332 aa).

Residues 22-24 and Gln-75 each bind FMN; that span reads PMM. Cys-105 acts as the Proton donor in catalysis. Residues Lys-144, His-177, 217–219, and 239–240 each bind FMN; these read NGG and GR.

This sequence belongs to the Dus family. DusA subfamily. FMN is required as a cofactor.

The catalysed reaction is 5,6-dihydrouridine(20) in tRNA + NADP(+) = uridine(20) in tRNA + NADPH + H(+). It carries out the reaction 5,6-dihydrouridine(20) in tRNA + NAD(+) = uridine(20) in tRNA + NADH + H(+). The enzyme catalyses 5,6-dihydrouridine(20a) in tRNA + NADP(+) = uridine(20a) in tRNA + NADPH + H(+). It catalyses the reaction 5,6-dihydrouridine(20a) in tRNA + NAD(+) = uridine(20a) in tRNA + NADH + H(+). In terms of biological role, catalyzes the synthesis of 5,6-dihydrouridine (D), a modified base found in the D-loop of most tRNAs, via the reduction of the C5-C6 double bond in target uridines. Specifically modifies U20 and U20a in tRNAs. This is tRNA-dihydrouridine(20/20a) synthase from Xylella fastidiosa (strain Temecula1 / ATCC 700964).